A 685-amino-acid chain; its full sequence is MAASSACLLGNGLSVYTTKQRFQKLGLDRTSKVTVVKASLDEKKHEGRRGFFKLLLGNAAAGVGLLASGNANADEQGQGVSSSRMSYSRFLEYLDKGRVEKVDLYENGTIAIVEAVSPELGNRIQRVRVQLPGLSQELLQKLRAKNIDFAAHNAQEDQGSPILNLIGNLAFPVILIGGLFLLSRRSSGGMGGPGGPGFPLQIGQSKAKFQMEPNTGVTFDDVAGVDEAKQDFMEVVEFLKKPERFTAVGARIPKGVLLVGPPGTGKTLLAKAIAGEAGVPFFSISGSEFVEMFVGVGASRVRDLFKKAKENAPCIVFVDEIDAVGRQRGTGIGGGNDEREQTLNQLLTEMDGFEGNTGVIVVAATNRADILDSALLRPGRFDRQVSVDVPDVKGRTDILKVHSGNKKFESGVSLEVIAMRTPGFSGADLANLLNEAAILAGRRGKTAISSKEIDDSIDRIVAGMEGTVMTDGKSKSLVAYHEVGHAICGTLTPGHDAVQKVTLIPRGQARGLTWFIPSDDPTLISKQQLFARIVGGLGGRAAEEVIFGESEVTTGAVSDLQQITGLAKQMVTTFGMSEIGPWSLMDSSEQSDVIMRMMARNSMSEKLANDIDTAVKTLSDKAYEIALSQIRNNREAMDKIVEILLEKETMSGDEFRAILSEFTEIPPENRVASSTSTSTPTPASV.

Residues 1 to 37 constitute a chloroplast transit peptide; that stretch reads MAASSACLLGNGLSVYTTKQRFQKLGLDRTSKVTVVK. Residues 38 to 73 constitute a thylakoid transit peptide; that stretch reads ASLDEKKHEGRRGFFKLLLGNAAAGVGLLASGNANA. Over 38-161 the chain is Lumenal, thylakoid; that stretch reads ASLDEKKHEG…HNAQEDQGSP (124 aa). The chain crosses the membrane as a helical span at residues 162 to 182; the sequence is ILNLIGNLAFPVILIGGLFLL. The Stromal segment spans residues 183 to 685; it reads SRRSSGGMGG…STSTPTPASV (503 aa). ATP is bound at residue 260–267; it reads GPPGTGKT. Position 481 (histidine 481) interacts with Zn(2+). The active site involves glutamate 482. Positions 485 and 559 each coordinate Zn(2+).

In the N-terminal section; belongs to the AAA ATPase family. This sequence in the C-terminal section; belongs to the peptidase M41 family. As to quaternary structure, heterohexamers with FTSH1, FTSH2 and FTSH5. May also form homooligomers. The cofactor is Zn(2+). In terms of tissue distribution, expressed in cotyledons, cauline and rosette leaves, stems, sepals, flovers and siliques. Very low in roots.

Its subcellular location is the plastid. The protein localises to the chloroplast thylakoid membrane. Functionally, part of a complex that function as an ATP-dependent zinc metallopeptidase. Involved in the thylakoid formation and in the removal of damaged D1 in the photosystem II, preventing cell death under high-intensity light conditions. The sequence is that of ATP-dependent zinc metalloprotease FTSH 8, chloroplastic (FTSH8) from Arabidopsis thaliana (Mouse-ear cress).